A 140-amino-acid polypeptide reads, in one-letter code: Hexon-interlacing protein (140 aa).

Positions 100–127 form a coiled coil; that stretch reads LTALLAQLDSLTRELNVVSQQLLDLRQQ. S135 carries the post-translational modification Phosphoserine; by host.

Belongs to the adenoviridae hexon-interlacing protein family. Homotrimer. Interacts with hexon protein; this interaction tethers the hexons together. Self-interacts with adjacent proteins. Interacts with kinesin light chain KLC1; this interaction leads to capsid disruption at the nuclear pore complex during virus entry into host cell.

Its subcellular location is the virion. It is found in the host nucleus. In terms of biological role, structural component of the virion that forms triskelion structures consisting of three molecules that stabilize three hexon trimers at the center of each icosahedral facet and fixes the peripentonal hexons. Dispensable for assembly. During virus entry, recruits the anterograde motor kinesin-1 to the capsid docked at the nuclear pore complex thereby subjecting the docked capsid to a pulling force. The resulting tension leads to capsid disruption, dispersion of capsid fragments toward cell periphery and eventually viral DNA entry into the host nucleus. In Human adenovirus C serotype 2 (HAdV-2), this protein is Hexon-interlacing protein.